We begin with the raw amino-acid sequence, 48 residues long: ATP synthase protein 8 (48 aa).

A helical transmembrane segment spans residues glutamine 12–leucine 32.

It belongs to the ATPase protein 8 family. In terms of assembly, F-type ATPases have 2 components, CF(1) - the catalytic core - and CF(0) - the membrane proton channel.

Its subcellular location is the mitochondrion membrane. Functionally, mitochondrial membrane ATP synthase (F(1)F(0) ATP synthase or Complex V) produces ATP from ADP in the presence of a proton gradient across the membrane which is generated by electron transport complexes of the respiratory chain. F-type ATPases consist of two structural domains, F(1) - containing the extramembraneous catalytic core and F(0) - containing the membrane proton channel, linked together by a central stalk and a peripheral stalk. During catalysis, ATP synthesis in the catalytic domain of F(1) is coupled via a rotary mechanism of the central stalk subunits to proton translocation. Part of the complex F(0) domain. Minor subunit located with subunit a in the membrane. The chain is ATP synthase protein 8 (ATP8) from Candida glabrata (strain ATCC 2001 / BCRC 20586 / JCM 3761 / NBRC 0622 / NRRL Y-65 / CBS 138) (Yeast).